The chain runs to 253 residues: Probable transcriptional regulatory protein Tlet_1011 (253 aa).

This sequence belongs to the TACO1 family.

The protein localises to the cytoplasm. This is Probable transcriptional regulatory protein Tlet_1011 from Pseudothermotoga lettingae (strain ATCC BAA-301 / DSM 14385 / NBRC 107922 / TMO) (Thermotoga lettingae).